Reading from the N-terminus, the 154-residue chain is Jupiter microtubule associated homolog 1 (154 aa).

Position 1 is an N-acetylmethionine (M1). Residues 1-19 show a composition bias toward polar residues; that stretch reads MTTTTTFKGVDPNSRNSSR. The disordered stretch occupies residues 1 to 154; it reads MTTTTTFKGV…PGGKSSLVLG (154 aa). At T2 the chain carries N-acetylthreonine; in Hematological and neurological expressed 1 protein, N-terminally processed. A phosphoserine mark is found at S28 and S31. The segment covering 47–59 has biased composition (polar residues); that stretch reads MASNIFGTPEENQ. Residue T54 is modified to Phosphothreonine. Over residues 60–71 the composition is skewed to low complexity; the sequence is ASWAKSAGAKSS. S71, S80, S87, S88, and S92 each carry phosphoserine. The span at 80-91 shows a compositional bias: polar residues; sequence SGLQRRNSSEAS. Residues 96–108 show a composition bias toward basic and acidic residues; that stretch reads LDLKGEGDIHENV. Residues 125–138 show a composition bias toward pro residues; sequence PAAPVPSPVAPAPV. S131 bears the Phosphoserine mark. At K148 the chain carries N6-acetyllysine.

This sequence belongs to the JUPITER family. In terms of assembly, interacts with the complex composed, at least, of APC, CTNNB1 and GSK3B; the interaction takes place with the inactive form of GSK3B (phosphorylated at 'Ser-9'). In terms of tissue distribution, expressed in testis, skeletal muscle, thymus, prostate, colon, peripheral blood cells, brain and placenta.

It is found in the nucleus. The protein localises to the cytoplasm. Its function is as follows. Modulates negatively AKT-mediated GSK3B signaling. Induces CTNNB1 'Ser-33' phosphorylation and degradation through the suppression of the inhibitory 'Ser-9' phosphorylation of GSK3B, which represses the function of the APC:CTNNB1:GSK3B complex and the interaction with CDH1/E-cadherin in adherent junctions. Plays a role in the regulation of cell cycle and cell adhesion. Has an inhibitory role on AR-signaling pathway through the induction of receptor proteasomal degradation. This chain is Jupiter microtubule associated homolog 1, found in Homo sapiens (Human).